A 291-amino-acid chain; its full sequence is Bifunctional protein FolD (291 aa).

NADP(+)-binding positions include 165–167 (GRS), Ser-190, and Ile-231.

It belongs to the tetrahydrofolate dehydrogenase/cyclohydrolase family. As to quaternary structure, homodimer.

It carries out the reaction (6R)-5,10-methylene-5,6,7,8-tetrahydrofolate + NADP(+) = (6R)-5,10-methenyltetrahydrofolate + NADPH. The catalysed reaction is (6R)-5,10-methenyltetrahydrofolate + H2O = (6R)-10-formyltetrahydrofolate + H(+). Its pathway is one-carbon metabolism; tetrahydrofolate interconversion. Catalyzes the oxidation of 5,10-methylenetetrahydrofolate to 5,10-methenyltetrahydrofolate and then the hydrolysis of 5,10-methenyltetrahydrofolate to 10-formyltetrahydrofolate. The chain is Bifunctional protein FolD from Azoarcus sp. (strain BH72).